A 378-amino-acid polypeptide reads, in one-letter code: MTTQFSVAGVELELLRYPTQQESNLQAWDAADEHLLKSLIESEQAAVPTAIINDSFGALSCGLSKLHPSWPLFVETDARTSFLGTEQNHGRNQLPMDNLQWFTSRDTLPENLALVLMKLPKNLSYFAHQLTRLSQVLPASTRVLVAAKSKSINSALLDIFAKHLGPASASLAWKNTRVITCVSDGKPRPLAKEVTWAIPEYQLEISNLSNVFAANKLDIGARIMLENLPKGDFKSIVDLGCGNGVLGLRTAQLFPEADIHFIDDSEMAVASAKANWARNQLPTDKGHFYWDDCMTHLPDDVQPDLVLCNPPFHQGEAITDHIAWQMFLDARRRLKEGGILHIVGNRHLAYHVKLQRLFKNCTTVASNGKFVILQAQKK.

Belongs to the methyltransferase superfamily. RlmG family.

Its subcellular location is the cytoplasm. The enzyme catalyses guanosine(1835) in 23S rRNA + S-adenosyl-L-methionine = N(2)-methylguanosine(1835) in 23S rRNA + S-adenosyl-L-homocysteine + H(+). In terms of biological role, specifically methylates the guanine in position 1835 (m2G1835) of 23S rRNA. In Shewanella sp. (strain W3-18-1), this protein is Ribosomal RNA large subunit methyltransferase G.